Reading from the N-terminus, the 240-residue chain is MTGKPAYKRVLLKASGEALMGSQGFGIDVSVADRIANDIKQARALGVEVGVVIGGGNIFRGVAVASKGGDRVTGDHMGMLATVINSLALRTSLHKIGVDSVVLSAIAMPEICESFSQRQATAYMDEGKVVIFAGGTGNPFFTTDSAAALRAAEIEADALLKGTQVDGIYSADPKKDPGATRFDQLTHKEFLDRGLAVMDTAAVALARENNIPIIVYSIHENGGLADILQGKGRCTIVSDN.

13-16 (KASG) lines the ATP pocket. The involved in allosteric activation by GTP stretch occupies residues 21-26 (GSQGFG). G55 contacts UMP. 2 residues coordinate ATP: G56 and R60. UMP-binding positions include D75 and 136 to 143 (TGNPFFTT). The ATP site is built by T163, Q164, Y169, and D172.

It belongs to the UMP kinase family. Homohexamer.

It is found in the cytoplasm. The catalysed reaction is UMP + ATP = UDP + ADP. The protein operates within pyrimidine metabolism; CTP biosynthesis via de novo pathway; UDP from UMP (UMPK route): step 1/1. Allosterically activated by GTP. Inhibited by UTP. In terms of biological role, catalyzes the reversible phosphorylation of UMP to UDP. The polypeptide is Uridylate kinase (Brucella suis biovar 1 (strain 1330)).